The primary structure comprises 224 residues: dTTP/UTP pyrophosphatase (224 aa).

D77 functions as the Proton acceptor in the catalytic mechanism.

Belongs to the Maf family. YhdE subfamily. A divalent metal cation is required as a cofactor.

Its subcellular location is the cytoplasm. The enzyme catalyses dTTP + H2O = dTMP + diphosphate + H(+). It catalyses the reaction UTP + H2O = UMP + diphosphate + H(+). In terms of biological role, nucleoside triphosphate pyrophosphatase that hydrolyzes dTTP and UTP. May have a dual role in cell division arrest and in preventing the incorporation of modified nucleotides into cellular nucleic acids. The chain is dTTP/UTP pyrophosphatase from Dehalococcoides mccartyi (strain ATCC BAA-2266 / KCTC 15142 / 195) (Dehalococcoides ethenogenes (strain 195)).